The chain runs to 129 residues: Glycine cleavage system H protein (129 aa).

In terms of domain architecture, Lipoyl-binding spans 24–106; that stretch reads LVRVGISAFA…HGEGWLLVLR (83 aa). At K65 the chain carries N6-lipoyllysine.

The protein belongs to the GcvH family. As to quaternary structure, the glycine cleavage system is composed of four proteins: P, T, L and H. The cofactor is (R)-lipoate.

Functionally, the glycine cleavage system catalyzes the degradation of glycine. The H protein shuttles the methylamine group of glycine from the P protein to the T protein. The chain is Glycine cleavage system H protein from Parasynechococcus marenigrum (strain WH8102).